The following is a 165-amino-acid chain: 3-isopropylmalate dehydratase small subunit (165 aa).

It belongs to the LeuD family. LeuD type 2 subfamily. Heterodimer of LeuC and LeuD.

It carries out the reaction (2R,3S)-3-isopropylmalate = (2S)-2-isopropylmalate. It participates in amino-acid biosynthesis; L-leucine biosynthesis; L-leucine from 3-methyl-2-oxobutanoate: step 2/4. In terms of biological role, catalyzes the isomerization between 2-isopropylmalate and 3-isopropylmalate, via the formation of 2-isopropylmaleate. The protein is 3-isopropylmalate dehydratase small subunit of Desulfovibrio desulfuricans (strain ATCC 27774 / DSM 6949 / MB).